Consider the following 403-residue polypeptide: CCA-adding enzyme (403 aa).

Residues Gly32 and Arg35 each coordinate ATP. Residues Gly32 and Arg35 each coordinate CTP. Asp45 and Asp47 together coordinate Mg(2+). The ATP site is built by Arg116, Asp159, Arg162, Arg165, and Arg168. Residues Arg116, Asp159, Arg162, Arg165, and Arg168 each coordinate CTP.

Belongs to the tRNA nucleotidyltransferase/poly(A) polymerase family. Bacterial CCA-adding enzyme type 3 subfamily. In terms of assembly, homodimer. The cofactor is Mg(2+).

The catalysed reaction is a tRNA precursor + 2 CTP + ATP = a tRNA with a 3' CCA end + 3 diphosphate. It catalyses the reaction a tRNA with a 3' CCA end + 2 CTP + ATP = a tRNA with a 3' CCACCA end + 3 diphosphate. In terms of biological role, catalyzes the addition and repair of the essential 3'-terminal CCA sequence in tRNAs without using a nucleic acid template. Adds these three nucleotides in the order of C, C, and A to the tRNA nucleotide-73, using CTP and ATP as substrates and producing inorganic pyrophosphate. tRNA 3'-terminal CCA addition is required both for tRNA processing and repair. Also involved in tRNA surveillance by mediating tandem CCA addition to generate a CCACCA at the 3' terminus of unstable tRNAs. While stable tRNAs receive only 3'-terminal CCA, unstable tRNAs are marked with CCACCA and rapidly degraded. The chain is CCA-adding enzyme from Leuconostoc citreum (strain KM20).